A 214-amino-acid polypeptide reads, in one-letter code: uncharacterized protein (214 aa).

5 helical membrane-spanning segments follow: residues 18–38 (LLLL…NTFV), 51–71 (DLAL…IVAG), 80–100 (ILVL…VLLV), 108–128 (LLVL…AFNV), and 145–165 (FFGV…GYII).

The protein localises to the cell membrane. This is an uncharacterized protein from Geobacillus stearothermophilus (Bacillus stearothermophilus).